The following is a 69-amino-acid chain: UPF0150 protein ssr1258 (69 aa).

This sequence belongs to the UPF0150 family.

In Synechocystis sp. (strain ATCC 27184 / PCC 6803 / Kazusa), this protein is UPF0150 protein ssr1258.